The primary structure comprises 200 residues: Biogenesis of lysosome-related organelles complex 1 subunit 3 (200 aa).

Over residues 1–11 the composition is skewed to basic residues; sequence MESQSRRRRPL. Positions 1–81 are disordered; the sequence is MESQSRRRRP…KAAPRDLPPL (81 aa). Positions 41–55 are enriched in low complexity; it reads LGPSGPTRGRPTGLR. A Phosphothreonine modification is found at threonine 63. Serine 65 is modified (phosphoserine).

Belongs to the BLOC1S3 family. In terms of assembly, component of the biogenesis of lysosome-related organelles complex 1 (BLOC-1) composed of BLOC1S1, BLOC1S2, BLOC1S3, BLOC1S4, BLOC1S5, BLOC1S6, DTNBP1/BLOC1S7 and SNAPIN/BLOC1S8. Octamer composed of one copy each BLOC1S1, BLOC1S2, BLOC1S3, BLOC1S4, BLOC1S5, BLOC1S6, DTNBP1/BLOC1S7 and SNAPIN/BLOC1S8. The BLOC-1 complex associates with the AP-3 protein complex and membrane protein cargos. Interacts directly with BLOC1S2. Interacts with BLOC1S4, BLOC1S5 and BLOC1S6. Post-translationally, phosphorylated.

It is found in the cytoplasm. In terms of biological role, component of the BLOC-1 complex, a complex that is required for normal biogenesis of lysosome-related organelles (LRO), such as platelet dense granules and melanosomes. In concert with the AP-3 complex, the BLOC-1 complex is required to target membrane protein cargos into vesicles assembled at cell bodies for delivery into neurites and nerve terminals. The BLOC-1 complex, in association with SNARE proteins, is also proposed to be involved in neurite extension. Plays a role in intracellular vesicle trafficking. The protein is Biogenesis of lysosome-related organelles complex 1 subunit 3 (BLOC1S3) of Bos taurus (Bovine).